Here is a 651-residue protein sequence, read N- to C-terminus: DNA mismatch repair protein MutL (651 aa).

The interval 383–405 is disordered; the sequence is TAAEEPTPAPTSPDLEIGDLDDQ.

The protein belongs to the DNA mismatch repair MutL/HexB family.

In terms of biological role, this protein is involved in the repair of mismatches in DNA. It is required for dam-dependent methyl-directed DNA mismatch repair. May act as a 'molecular matchmaker', a protein that promotes the formation of a stable complex between two or more DNA-binding proteins in an ATP-dependent manner without itself being part of a final effector complex. The protein is DNA mismatch repair protein MutL of Lacticaseibacillus casei (strain BL23) (Lactobacillus casei).